We begin with the raw amino-acid sequence, 355 residues long: dTDP-glucose 4,6-dehydratase (355 aa).

NAD(+) contacts are provided by residues 12–13 (FI), 33–36 (DKLT), 59–60 (DI), 81–85 (LAAES), and T100. S85 contacts substrate. Substrate is bound at residue T134. The active-site Proton donor is the D135. Residues E136 and Y160 each act as proton acceptor in the active site. 160 to 164 (YSASK) provides a ligand contact to NAD(+). N189 provides a ligand contact to substrate. N190 is a binding site for NAD(+). Substrate contacts are provided by residues 199–200 (KL), 215–217 (PVY), R224, N259, and 293–297 (DRPGH).

Belongs to the NAD(P)-dependent epimerase/dehydratase family. dTDP-glucose dehydratase subfamily. In terms of assembly, homodimer. NAD(+) serves as cofactor.

It catalyses the reaction dTDP-alpha-D-glucose = dTDP-4-dehydro-6-deoxy-alpha-D-glucose + H2O. The protein operates within carbohydrate biosynthesis; dTDP-L-rhamnose biosynthesis. It functions in the pathway bacterial outer membrane biogenesis; LPS O-antigen biosynthesis. Catalyzes the dehydration of dTDP-D-glucose to form dTDP-6-deoxy-D-xylo-4-hexulose via a three-step process involving oxidation, dehydration and reduction. The chain is dTDP-glucose 4,6-dehydratase (rfbB1) from Neisseria meningitidis serogroup B (strain ATCC BAA-335 / MC58).